Reading from the N-terminus, the 621-residue chain is Chaperone protein HscA homolog (621 aa).

It belongs to the heat shock protein 70 family.

Its function is as follows. Chaperone involved in the maturation of iron-sulfur cluster-containing proteins. Has a low intrinsic ATPase activity which is markedly stimulated by HscB. The sequence is that of Chaperone protein HscA homolog from Acidithiobacillus ferrooxidans (strain ATCC 23270 / DSM 14882 / CIP 104768 / NCIMB 8455) (Ferrobacillus ferrooxidans (strain ATCC 23270)).